The following is a 283-amino-acid chain: NADPH-dependent 7-cyano-7-deazaguanine reductase (283 aa).

Substrate is bound at residue 90 to 92; it reads IES. 92–93 serves as a coordination point for NADPH; the sequence is SK. The Thioimide intermediate role is filled by C191. The Proton donor role is filled by D198. 230–231 serves as a coordination point for substrate; sequence HE. 259 to 260 contacts NADPH; that stretch reads RG.

It belongs to the GTP cyclohydrolase I family. QueF type 2 subfamily. In terms of assembly, homodimer.

The protein resides in the cytoplasm. It catalyses the reaction 7-aminomethyl-7-carbaguanine + 2 NADP(+) = 7-cyano-7-deazaguanine + 2 NADPH + 3 H(+). It participates in tRNA modification; tRNA-queuosine biosynthesis. Catalyzes the NADPH-dependent reduction of 7-cyano-7-deazaguanine (preQ0) to 7-aminomethyl-7-deazaguanine (preQ1). The sequence is that of NADPH-dependent 7-cyano-7-deazaguanine reductase from Tolumonas auensis (strain DSM 9187 / NBRC 110442 / TA 4).